We begin with the raw amino-acid sequence, 395 residues long: ETS-related transcription factor Elf-3 (395 aa).

Residues 69–155 form the PNT domain; that stretch reads EPPAVLHLAE…AQLRDLTSSS (87 aa). Residues 200–240 show a composition bias toward low complexity; that stretch reads ASPYYGSSYGPGAPSPGSSDFSTSGTDTPQSSHSSDSGGSD. Positions 200-275 are disordered; the sequence is ASPYYGSSYG…HGKRKRGRPR (76 aa). A compositionally biased stretch (basic and acidic residues) spans 246 to 265; it reads TDSKVFPRDGFPDYKKGEPK. Residues 266–275 are compositionally biased toward basic residues; it reads HGKRKRGRPR. A DNA-binding region (ETS) is located at residues 297–379; sequence THLWEFIRDI…DGRRLVYKFG (83 aa).

Belongs to the ETS family. As to quaternary structure, interacts with TBP. Interacts with CREBBP and EP300; these act as transcriptional coactivators of ELF3 and positively modulate its function. Interacts with XRCC5/KU86 and XRCC6/KU70; these inhibit the ability of ELF3 to bind DNA and negatively modulate its transcriptional activity. Associated with CLND7 and POU2F3. Interacts with ZNF768.

Its subcellular location is the cytoplasm. The protein resides in the nucleus. Functionally, transcriptional activator that binds and transactivates ETS sequences containing the consensus nucleotide core sequence GGA[AT]. Acts synergistically with POU2F3 to transactivate the SPRR2A promoter and with RUNX1 to transactivate the ANGPT1 promoter. Also transactivates collagenase, CCL20, CLND7, FLG, KRT8, NOS2, PTGS2, SPRR2B, TGFBR2 and TGM3 promoters. Represses KRT4 promoter activity. Involved in mediating vascular inflammation. May play an important role in epithelial cell differentiation and tumorigenesis. May be a critical downstream effector of the ERBB2 signaling pathway. May be associated with mammary gland development and involution. Plays an important role in the regulation of transcription with TATA-less promoters in preimplantation embryos, which is essential in preimplantation development. The chain is ETS-related transcription factor Elf-3 from Rattus norvegicus (Rat).